A 491-amino-acid chain; its full sequence is Glycogen synthase (491 aa).

K15 is a binding site for ADP-alpha-D-glucose.

The protein belongs to the glycosyltransferase 1 family. Bacterial/plant glycogen synthase subfamily.

The enzyme catalyses [(1-&gt;4)-alpha-D-glucosyl](n) + ADP-alpha-D-glucose = [(1-&gt;4)-alpha-D-glucosyl](n+1) + ADP + H(+). It participates in glycan biosynthesis; glycogen biosynthesis. Its function is as follows. Synthesizes alpha-1,4-glucan chains using ADP-glucose. The chain is Glycogen synthase from Treponema denticola (strain ATCC 35405 / DSM 14222 / CIP 103919 / JCM 8153 / KCTC 15104).